A 350-amino-acid polypeptide reads, in one-letter code: Phosphoribosylformylglycinamidine cyclo-ligase (350 aa).

Belongs to the AIR synthase family.

The protein localises to the cytoplasm. It carries out the reaction 2-formamido-N(1)-(5-O-phospho-beta-D-ribosyl)acetamidine + ATP = 5-amino-1-(5-phospho-beta-D-ribosyl)imidazole + ADP + phosphate + H(+). The protein operates within purine metabolism; IMP biosynthesis via de novo pathway; 5-amino-1-(5-phospho-D-ribosyl)imidazole from N(2)-formyl-N(1)-(5-phospho-D-ribosyl)glycinamide: step 2/2. In Cupriavidus pinatubonensis (strain JMP 134 / LMG 1197) (Cupriavidus necator (strain JMP 134)), this protein is Phosphoribosylformylglycinamidine cyclo-ligase.